Consider the following 517-residue polypeptide: Nicotine N-demethylase CYP82E4 (517 aa).

Residues 2-22 form a helical membrane-spanning segment; sequence VFPIEAIVGLVTFTFLFFFLW. Lys-254 is covalently cross-linked (Glycyl lysine isopeptide (Lys-Gly) (interchain with G-Cter in ubiquitin)). Position 457 (Cys-457) interacts with heme.

The protein belongs to the cytochrome P450 family. CYP82E2 subfamily. It depends on heme as a cofactor. Expressed at low levels in green leaves.

It localises to the membrane. The catalysed reaction is (S)-nicotine + reduced [NADPH--hemoprotein reductase] + O2 = (S)-nornicotine + formaldehyde + oxidized [NADPH--hemoprotein reductase] + H2O + H(+). Its pathway is alkaloid biosynthesis; nicotine biosynthesis. Its function is as follows. Involved in the biosynthesis of pyridine alkaloid natural products, leading mainly to the production of anabasine, anatabine, nicotine and nornicotine, effective deterrents against herbivores with antiparasitic and pesticide properties (neurotoxins); nornicotine serves as the precursor in the synthesis of the carcinogen compound N'-nitrosonornicotine (NNN). Catalyzes the demethylation of nicotine to form nornicotine. The polypeptide is Nicotine N-demethylase CYP82E4 (Nicotiana tabacum (Common tobacco)).